We begin with the raw amino-acid sequence, 407 residues long: Phosphopentomutase (407 aa).

Residues aspartate 10, aspartate 306, histidine 311, aspartate 347, histidine 348, and histidine 359 each contribute to the Mn(2+) site.

It belongs to the phosphopentomutase family. It depends on Mn(2+) as a cofactor.

It localises to the cytoplasm. The enzyme catalyses 2-deoxy-alpha-D-ribose 1-phosphate = 2-deoxy-D-ribose 5-phosphate. It catalyses the reaction alpha-D-ribose 1-phosphate = D-ribose 5-phosphate. Its pathway is carbohydrate degradation; 2-deoxy-D-ribose 1-phosphate degradation; D-glyceraldehyde 3-phosphate and acetaldehyde from 2-deoxy-alpha-D-ribose 1-phosphate: step 1/2. In terms of biological role, isomerase that catalyzes the conversion of deoxy-ribose 1-phosphate (dRib-1-P) and ribose 1-phosphate (Rib-1-P) to deoxy-ribose 5-phosphate (dRib-5-P) and ribose 5-phosphate (Rib-5-P), respectively. The sequence is that of Phosphopentomutase from Enterobacter sp. (strain 638).